The following is a 361-amino-acid chain: Replication-associated protein (361 aa).

The 109-residue stretch at 8-116 (RINAKNYFLT…DGDVLDHGVF (109 aa)) folds into the CRESS-DNA virus Rep endonuclease domain. The RCR-1 signature appears at 15–18 (FLTY). Residues glutamate 49, histidine 57, and histidine 59 each coordinate a divalent metal cation. Positions 57 to 59 (HLH) match the RCR-2 motif. Catalysis depends on tyrosine 103, which acts as the For DNA cleavage activity. The RCR-3 signature appears at 103 to 106 (YMEK). Aspartate 107 provides a ligand contact to a divalent metal cation. Residues 143–153 (KASALNILREK) form a binding to RBR1 region. The oligomerization stretch occupies residues 156–176 (KDFVLQFHNLNSNLDRIFTPP). 221-228 (GDSRTGKT) is an ATP binding site.

This sequence belongs to the geminiviridae Rep protein family. Homooligomer. Interacts with the replication enhancer protein (REn). Interacts with host retinoblastoma-related protein 1 (RBR1), and may thereby induce the transcription of host replicative enzymes even if the cell is not dividing anymore. Interacts with host PCNA. Interacts with host SCE1 protein. Mg(2+) serves as cofactor. The cofactor is Mn(2+).

It is found in the host nucleus. Essential for the replication of viral ssDNA. The closed circular ssDNA genome is first converted to a superhelical dsDNA. Rep binds a specific region at the genome origin of replication. It introduces an endonucleolytic nick within the conserved sequence 5'-TAATATTAC-3' in the intergenic region of the genome present in all geminiviruses, thereby initiating the rolling circle replication (RCR). Following cleavage, binds covalently to the 5'-phosphate of DNA as a tyrosyl ester. The cleavage gives rise to a free 3'-OH that serves as a primer for the cellular DNA polymerase. The polymerase synthesizes the (+) strand DNA by rolling circle mechanism. After one round of replication, a Rep-catalyzed nucleotidyl transfer reaction releases a circular single-stranded virus genome, thereby terminating the replication. Displays origin-specific DNA cleavage, nucleotidyl transferase, ATPase and helicase activities. This is Replication-associated protein from Tomato yellow leaf curl China virus (TYLCCNV).